Here is a 131-residue protein sequence, read N- to C-terminus: Small ribosomal subunit protein uS10m (131 aa).

It belongs to the universal ribosomal protein uS10 family.

The protein localises to the mitochondrion. The protein is Small ribosomal subunit protein uS10m (mrps10) of Dictyostelium discoideum (Social amoeba).